Reading from the N-terminus, the 207-residue chain is Probable isochorismatase (207 aa).

This sequence belongs to the isochorismatase family.

It catalyses the reaction isochorismate + H2O = (2S,3S)-2,3-dihydroxy-2,3-dihydrobenzoate + pyruvate. The protein operates within antibiotic biosynthesis; phenazine biosynthesis. Functionally, involved in the biosynthesis of the antibiotic phenazine, a nitrogen-containing heterocyclic molecule having important roles in virulence, competition and biological control. This isochorismatase may remove pyruvate from chorismate during the formation of the phenazine ring structure and/or stabilize the phenazine biosynthetic complex. This is Probable isochorismatase (phzA) from Pseudomonas chlororaphis (Pseudomonas aureofaciens).